A 462-amino-acid polypeptide reads, in one-letter code: tRNA(Ile)-lysidine synthase (462 aa).

26-31 (SGGVDS) contacts ATP.

The protein belongs to the tRNA(Ile)-lysidine synthase family.

The protein resides in the cytoplasm. The catalysed reaction is cytidine(34) in tRNA(Ile2) + L-lysine + ATP = lysidine(34) in tRNA(Ile2) + AMP + diphosphate + H(+). Functionally, ligates lysine onto the cytidine present at position 34 of the AUA codon-specific tRNA(Ile) that contains the anticodon CAU, in an ATP-dependent manner. Cytidine is converted to lysidine, thus changing the amino acid specificity of the tRNA from methionine to isoleucine. This chain is tRNA(Ile)-lysidine synthase, found in Enterococcus faecalis (strain ATCC 700802 / V583).